A 395-amino-acid polypeptide reads, in one-letter code: Elongation factor Tu (395 aa).

Residues 10-204 form the tr-type G domain; sequence KPHVNIGTIG…AVDEYIPTPQ (195 aa). Positions 19–26 are G1; that stretch reads GHVDHGKT. Position 19 to 26 (19 to 26) interacts with GTP; the sequence is GHVDHGKT. Position 26 (T26) interacts with Mg(2+). Residues 60–64 are G2; that stretch reads GITIS. The G3 stretch occupies residues 81–84; it reads DCPG. GTP-binding positions include 81 to 85 and 136 to 139; these read DCPGH and NKCD. The G4 stretch occupies residues 136-139; it reads NKCD. Positions 174–176 are G5; that stretch reads SAL.

Belongs to the TRAFAC class translation factor GTPase superfamily. Classic translation factor GTPase family. EF-Tu/EF-1A subfamily. As to quaternary structure, monomer.

The protein resides in the cytoplasm. The catalysed reaction is GTP + H2O = GDP + phosphate + H(+). In terms of biological role, GTP hydrolase that promotes the GTP-dependent binding of aminoacyl-tRNA to the A-site of ribosomes during protein biosynthesis. The polypeptide is Elongation factor Tu (Anoxybacillus flavithermus (strain DSM 21510 / WK1)).